The primary structure comprises 124 residues: Probable glycine cleavage system H protein (124 aa).

The region spanning 23–104 is the Lipoyl-binding domain; the sequence is VATVGITDYA…PYKNWLVKIR (82 aa). Lys64 is subject to N6-lipoyllysine.

Belongs to the GcvH family. The glycine cleavage system is composed of four proteins: P, T, L and H. (R)-lipoate is required as a cofactor.

The glycine cleavage system catalyzes the degradation of glycine. The H protein shuttles the methylamine group of glycine from the P protein to the T protein. This chain is Probable glycine cleavage system H protein, found in Picrophilus torridus (strain ATCC 700027 / DSM 9790 / JCM 10055 / NBRC 100828 / KAW 2/3).